The sequence spans 388 residues: Na(+)/H(+) antiporter NhaA (388 aa).

At 1–11 (MKHLHRFFSSD) the chain is on the cytoplasmic side. The helical transmembrane segment at 12 to 31 (ASGGIILIIAAILAMIMANS) threads the bilayer. Residues 32-58 (GATSGWYHDFLETPVQLRVGSLEINKN) are Periplasmic-facing. A helical membrane pass occupies residues 59-80 (MLLWINDALMAVFFLLVGLEVK). Residues 81–96 (RELMQGSLASLLQAAF) lie on the Cytoplasmic side of the membrane. Residues 97–116 (PVIAAIGGMIVPALLYLAFN) traverse the membrane as a helical segment. Topologically, residues 117–122 (YADPIT) are periplasmic. Residues 123-130 (REGWAIPA) traverse the membrane as a helical segment. At 131-154 (ATDIAFALGVLALLGSRVPLVLKI) the chain is on the cytoplasmic side. A helical transmembrane segment spans residues 155-176 (FLMALAIIDDLGAIIIIALFYT). Topologically, residues 177-180 (NDLS) are periplasmic. Residues 181-200 (MASLGVAAVAIAVLAVLNLC) form a helical membrane-spanning segment. Over 201–204 (GVRR) the chain is Cytoplasmic. A helical membrane pass occupies residues 205-222 (TGVYILVGVVLWTAVLKS). A topological domain (periplasmic) is located at residue Gly-223. Residues 224 to 236 (VHATLAGVIVGFF) form a helical membrane-spanning segment. Over 237 to 253 (IPLKEKHGRSPAKRLEH) the chain is Cytoplasmic. Residues 254–272 (VLHPWVAYLILPLFAFANA) traverse the membrane as a helical segment. Over 273-286 (GVSLQGVTLDGLTS) the chain is Periplasmic. The chain crosses the membrane as a helical span at residues 287–310 (ILPLGIIAGLLIGKPLGISLFCWL). Residues 311-339 (ALRLKLAHLPEGTTYQQIMVVGILCGIGF) are Cytoplasmic-facing. A helical transmembrane segment spans residues 340–350 (TMSIFIASLAF). Over 351 to 357 (GSVDPEL) the chain is Periplasmic. A helical membrane pass occupies residues 358–380 (INWAKLGILVGSISSAVIGYSWL). Residues 381-388 (RVRLRPSV) lie on the Cytoplasmic side of the membrane.

It belongs to the NhaA Na(+)/H(+) (TC 2.A.33) antiporter family.

The protein resides in the cell inner membrane. It carries out the reaction Na(+)(in) + 2 H(+)(out) = Na(+)(out) + 2 H(+)(in). In terms of biological role, na(+)/H(+) antiporter that extrudes sodium in exchange for external protons. This chain is Na(+)/H(+) antiporter NhaA, found in Shigella flexneri serotype 5b (strain 8401).